Consider the following 288-residue polypeptide: Eukaryotic translation initiation factor 3 subunit F-2 (288 aa).

The MPN domain occupies 12–149; it reads VLLHPLVLFQ…TRIFCAVATG (138 aa).

Belongs to the eIF-3 subunit F family. Component of the eukaryotic translation initiation factor 3 (eIF-3) complex. The eIF-3 complex interacts with pix.

Its subcellular location is the cytoplasm. Its function is as follows. Component of the eukaryotic translation initiation factor 3 (eIF-3) complex, which is involved in protein synthesis of a specialized repertoire of mRNAs and, together with other initiation factors, stimulates binding of mRNA and methionyl-tRNAi to the 40S ribosome. The eIF-3 complex specifically targets and initiates translation of a subset of mRNAs involved in cell proliferation. The sequence is that of Eukaryotic translation initiation factor 3 subunit F-2 from Drosophila persimilis (Fruit fly).